Consider the following 224-residue polypeptide: Deoxyribose-phosphate aldolase (224 aa).

Residue aspartate 98 is the Proton donor/acceptor of the active site. Catalysis depends on lysine 159, which acts as the Schiff-base intermediate with acetaldehyde. Lysine 189 acts as the Proton donor/acceptor in catalysis.

Belongs to the DeoC/FbaB aldolase family. DeoC type 1 subfamily.

The protein localises to the cytoplasm. The catalysed reaction is 2-deoxy-D-ribose 5-phosphate = D-glyceraldehyde 3-phosphate + acetaldehyde. Its pathway is carbohydrate degradation; 2-deoxy-D-ribose 1-phosphate degradation; D-glyceraldehyde 3-phosphate and acetaldehyde from 2-deoxy-alpha-D-ribose 1-phosphate: step 2/2. Functionally, catalyzes a reversible aldol reaction between acetaldehyde and D-glyceraldehyde 3-phosphate to generate 2-deoxy-D-ribose 5-phosphate. The sequence is that of Deoxyribose-phosphate aldolase from Methanothermobacter thermautotrophicus (strain ATCC 29096 / DSM 1053 / JCM 10044 / NBRC 100330 / Delta H) (Methanobacterium thermoautotrophicum).